A 359-amino-acid polypeptide reads, in one-letter code: Guanine nucleotide-binding protein G(q) subunit alpha (359 aa).

2 S-palmitoyl cysteine lipidation sites follow: C9 and C10. Positions 38-359 constitute a G-alpha domain; that stretch reads RELKLLLLGT…QLNLKEYNLV (322 aa). Residues 41–54 form a G1 motif region; sequence KLLLLGTGESGKST. S50, G51, K52, S53, T54, S156, L180, R181, and R183 together coordinate GTP. S53 is a binding site for Mg(2+). Residues 178–186 form a G2 motif region; it reads DVLRVRVPT. A Mg(2+)-binding site is contributed by T186. The G3 motif stretch occupies residues 201-210; sequence FRMVDVGGQR. Q209 carries the post-translational modification 5-glutamyl histamine. A G4 motif region spans residues 270–277; the sequence is ILFLNKKD. Positions 274, 275, 277, and 331 each coordinate GTP. The interval 329–334 is G5 motif; it reads TCATDT.

The protein belongs to the G-alpha family. G(q) subfamily. G proteins are composed of 3 units; alpha, beta and gamma. The alpha chain contains the guanine nucleotide binding site. Interacts (GDP-bound form) with RIC8A (via C-terminus); promoting GNAQ folding and association with the plasma membrane. Binds NHERF1. Forms a complex with PECAM1 and BDKRB2. Interacts with GAS2L2. Post-translationally, palmitoylated by ZDHHC3 and ZDHHC7. Palmitoylation occurs in the Golgi and participates in the localization of GNAQ to the plasma membrane. Histaminylated at Gln-209 residues by TGM2.

It is found in the cell membrane. Its subcellular location is the golgi apparatus. It localises to the nucleus. The protein resides in the nucleus membrane. It carries out the reaction GTP + H2O = GDP + phosphate + H(+). Its function is as follows. Guanine nucleotide-binding proteins (G proteins) function as transducers downstream of G protein-coupled receptors (GPCRs) in numerous signaling cascades. The alpha chain contains the guanine nucleotide binding site and alternates between an active, GTP-bound state and an inactive, GDP-bound state. Signaling by an activated GPCR promotes GDP release and GTP binding. The alpha subunit has a low GTPase activity that converts bound GTP to GDP, thereby terminating the signal. Both GDP release and GTP hydrolysis are modulated by numerous regulatory proteins. Signaling is mediated via phospholipase C-beta-dependent inositol lipid hydrolysis for signal propagation: activates phospholipase C-beta: following GPCR activation, GNAQ activates PLC-beta (PLCB1, PLCB2, PLCB3 or PLCB4), leading to production of diacylglycerol (DAG) and inositol 1,4,5-trisphosphate (IP3). Required for platelet activation. Regulates B-cell selection and survival and is required to prevent B-cell-dependent autoimmunity. Regulates chemotaxis of BM-derived neutrophils and dendritic cells (in vitro). Transduces FFAR4 signaling in response to long-chain fatty acids (LCFAs). Together with GNA11, required for heart development. The polypeptide is Guanine nucleotide-binding protein G(q) subunit alpha (GNAQ) (Canis lupus familiaris (Dog)).